Here is a 407-residue protein sequence, read N- to C-terminus: Argininosuccinate synthase (407 aa).

Residues 13-21 (AYSGGLDTS) and Ala-40 contribute to the ATP site. L-citrulline-binding residues include Tyr-91 and Ser-96. Position 121 (Gly-121) interacts with ATP. 3 residues coordinate L-aspartate: Thr-123, Asn-127, and Asp-128. An L-citrulline-binding site is contributed by Asn-127. Arg-131, Ser-182, Ser-191, Glu-267, and Tyr-279 together coordinate L-citrulline.

Belongs to the argininosuccinate synthase family. Type 1 subfamily. Homotetramer.

It localises to the cytoplasm. The catalysed reaction is L-citrulline + L-aspartate + ATP = 2-(N(omega)-L-arginino)succinate + AMP + diphosphate + H(+). It participates in amino-acid biosynthesis; L-arginine biosynthesis; L-arginine from L-ornithine and carbamoyl phosphate: step 2/3. The chain is Argininosuccinate synthase from Agrobacterium fabrum (strain C58 / ATCC 33970) (Agrobacterium tumefaciens (strain C58)).